A 73-amino-acid chain; its full sequence is UPF0346 protein SSP1318 (73 aa).

The protein belongs to the UPF0346 family.

This is UPF0346 protein SSP1318 from Staphylococcus saprophyticus subsp. saprophyticus (strain ATCC 15305 / DSM 20229 / NCIMB 8711 / NCTC 7292 / S-41).